Here is a 321-residue protein sequence, read N- to C-terminus: Ribose-phosphate pyrophosphokinase (321 aa).

ATP-binding positions include 44–46 (DGE) and 103–104 (RQ). Residues His137 and Asp179 each contribute to the Mg(2+) site. Lys202 is an active-site residue. Residues Arg204, Asp228, and 232–236 (DTAGT) each bind D-ribose 5-phosphate.

Belongs to the ribose-phosphate pyrophosphokinase family. Class I subfamily. Homohexamer. The cofactor is Mg(2+).

The protein resides in the cytoplasm. The catalysed reaction is D-ribose 5-phosphate + ATP = 5-phospho-alpha-D-ribose 1-diphosphate + AMP + H(+). The protein operates within metabolic intermediate biosynthesis; 5-phospho-alpha-D-ribose 1-diphosphate biosynthesis; 5-phospho-alpha-D-ribose 1-diphosphate from D-ribose 5-phosphate (route I): step 1/1. Involved in the biosynthesis of the central metabolite phospho-alpha-D-ribosyl-1-pyrophosphate (PRPP) via the transfer of pyrophosphoryl group from ATP to 1-hydroxyl of ribose-5-phosphate (Rib-5-P). This Staphylococcus aureus (strain Mu50 / ATCC 700699) protein is Ribose-phosphate pyrophosphokinase.